Reading from the N-terminus, the 621-residue chain is Stimulated by retinoic acid gene 6 protein-like (621 aa).

The Extracellular portion of the chain corresponds to 1–21 (MLAASTRTRQINITCDNPVDR). N-linked (GlcNAc...) asparagine glycosylation occurs at asparagine 12. Residues 22–42 (EVFLHYSLIPSLCIILVLSFL) form a helical membrane-spanning segment. Residues 43–53 (QRREHRRQRDD) are Cytoplasmic-facing. A helical transmembrane segment spans residues 54-74 (TSYLLGNHFGIIVPLDFVGTF). Residues 75 to 110 (SNRWSYGAAFGATANKVMFLFSEGYQPLTVPQWAQA) lie on the Extracellular side of the membrane. Residues 111–131 (FVLFIGGMEVGLSYFPFFACL) form a helical membrane-spanning segment. Residues 132 to 137 (SSEFQL) are Cytoplasmic-facing. A helical transmembrane segment spans residues 138–158 (VSSILGFSYSLTWFVVTVLQI). The Extracellular segment spans residues 159–173 (SQCPHGQFLGRFETL). The helical transmembrane segment at 174–194 (VFYWPSLLCLGFLLGRFLHMF) threads the bilayer. The Cytoplasmic portion of the chain corresponds to 195–258 (LKALPVHLGL…CFQFPSRMVG (64 aa)). The chain crosses the membrane as a helical span at residues 259-279 (TLLLAFICLYLFIVIEFCVFL). Over 280–321 (HVRDKLDMFEDKLESYLTHMNETGTLTPIILQVKELISVTKG) the chain is Extracellular. The helical transmembrane segment at 322 to 342 (VWVVTILPAALTCVTYLFHIL) threads the bilayer. The Cytoplasmic segment spans residues 343 to 383 (ACYRKHMKRLWAGDKHFLPQKFHSPSSAASVVAIARYSGWQ). A helical membrane pass occupies residues 384-404 (IAYILWGYLIIHVVQSLCGVM). The Extracellular portion of the chain corresponds to 405-424 (LMYGLVLPIIHHRGLEMLQG). A helical membrane pass occupies residues 425 to 445 (FGLGVLTLSIVVGLIILQVWI). The Cytoplasmic segment spans residues 446-476 (AGTFFLQPKLGTSDKQKPLALNNRRAFHNFN). Residues 477 to 497 (YFLFFYNVLLGLGACLSRLLI) traverse the membrane as a helical segment. Over 498–621 (SCLLGTWLIA…TQILLTCSDC (124 aa)) the chain is Extracellular. Threonine 612 is modified (phosphothreonine).

Glycosylated. Highly expressed in liver and small intestine. Also expressed in spleen, kidney, colon, stomach, placenta, adipose tissue and isolated adipocytes.

It is found in the cell membrane. In terms of biological role, acts as a high-affinity cell-surface receptor for retinol-binding protein RBP4 and mediates RBP4-dependent retinol uptake in the liver. This Mus musculus (Mouse) protein is Stimulated by retinoic acid gene 6 protein-like.